The chain runs to 1104 residues: Receptor-mediated endocytosis protein 6 (1104 aa).

The Ras-GAP domain occupies L156–N389. The disordered stretch occupies residues S663–P682. One can recognise a VPS9 domain in the interval Q966 to L1104.

Belongs to the GAPVD1 family. As to quaternary structure, interacts with GDP-bound rab-5. Interacts with alpha-adaptin.

The protein localises to the membrane. Its subcellular location is the cytoplasmic vesicle. It is found in the clathrin-coated vesicle. Its function is as follows. Acts both as a GTPase-activating protein (GAP) and a guanine nucleotide exchange factor (GEF), and participates in endocytosis. Acts by regulating the activation of rab-5 by exchanging bound GDP for free GTP at clathrin coated pits. The sequence is that of Receptor-mediated endocytosis protein 6 (rme-6) from Caenorhabditis briggsae.